Here is a 96-residue protein sequence, read N- to C-terminus: Cell division topological specificity factor (96 aa).

Belongs to the MinE family.

Prevents the cell division inhibition by proteins MinC and MinD at internal division sites while permitting inhibition at polar sites. This ensures cell division at the proper site by restricting the formation of a division septum at the midpoint of the long axis of the cell. The chain is Cell division topological specificity factor from Nitrosococcus oceani (strain ATCC 19707 / BCRC 17464 / JCM 30415 / NCIMB 11848 / C-107).